Here is a 211-residue protein sequence, read N- to C-terminus: Putative transposase for insertion sequence element IS402 (211 aa).

A disordered region spans residues Arg51 to Lys71.

Belongs to the transposase 11 family.

Functionally, involved in the transposition of the insertion sequence. The chain is Putative transposase for insertion sequence element IS402 from Burkholderia cepacia (Pseudomonas cepacia).